Consider the following 170-residue polypeptide: Protein Rex (170 aa).

The segment covering 1–16 has biased composition (basic residues); the sequence is MPKTRRQRTRRARRNR. Disordered regions lie at residues 1–27 and 69–170; these read MPKT…SQDL and VQST…GEKP. The short motif at 2 to 19 is the Nuclear localization signal, and RNA-binding (RxRE) element; the sequence is PKTRRQRTRRARRNRPPT. Residues 57–71 are homomultimerization; that stretch reads PPAYIDMPSWPPVQS. The segment covering 82–95 has biased composition (low complexity); it reads ALSALLSNTLSLAS. Residues 83-94 carry the Nuclear export signal motif; sequence LSALLSNTLSLA. The homomultimerization stretch occupies residues 124–132; that stretch reads PSFNQCEST. The span at 143 to 160 shows a compositional bias: low complexity; sequence PSGISSPPSPSPNLASVP. Phosphoserine; by host occurs at positions 151 and 153. The span at 161-170 shows a compositional bias: polar residues; it reads KTSTPPGEKP.

This sequence belongs to the deltaretrovirus Rex protein family. Homomultimer. Phosphorylation is essential for RNA-binding and function.

It localises to the host nucleus. The protein resides in the host nucleolus. Its subcellular location is the host cytoplasm. Functionally, rex escorts unspliced gag-pro-pol and singly spliced env mRNAs out of the nucleus of infected cells. These mRNAs carry a recognition sequence called Rex responsive element (RxRE or XRE) located at the 3' region of the long terminal repeat (LTR). This function is essential since most HTLV proteins are translated from unspliced or partially spliced pre-mRNAs that cannot exit the nucleus by the pathway used by fully processed cellular mRNAs. In Human T-cell leukemia virus 2 (HTLV-2), this protein is Protein Rex.